The chain runs to 1176 residues: MLEGRILADFRQTDASLHQGRPQSSSNSSVPGAPNRVSFAKLREPLEVPGLLDVQTDSFEWLIGSQRWRESAAQRGDATPVGGLEEVLYELSPIEDFSGSMSLSFSDPRFDEVKAPVDECKDKDMTYAAPLFVTAEFINNNTGEIKSQTVFMGDFPMMTEKGTFIINGTERVVVSQLVRSPGVYFDETIDKSTDKLLHSVKVIPSRGAWLEFDVDKRDTVGVRIDRKRRQPVTVLLKALGWSNEQIHERFGFSEIMMGTLEKDNTAGTDEALLDIYRKLRPGEPPTKESAQTLLENLFFKEKRYDLARVGRYKVNKKLGLNAGQPITSSTLTEEDVVATIEYLVRLHEGQTAMTAPGGVEVPVETDDIDHFGNRRLRTVGELIQNQIRVGMSRMERVVRERMTTQDVEAITPQTLINIRPVVAAIKEFFGTSQLSQFMDQNNPLSGLTHKRRLSALGPGGLSRERAGLEVRDVHPSHYGRMCPIETPEGPNIGLIGSLSVYARVNPFGFIETPYRKVVDGVVSDEIHYLTADEEDRHVVAQANSPIDAQGRFVEPRVLVRRKAGEVEYVPSSEVDYMDVSPRQMVSVATAMIPFLEHDDANRALMGANMQRQAVPLVRSEAPLVGTGMELRAAIDAGDVVVADKAGVIEEVSADYITVMADDGTRHTYRMRKFARSNHGTCANQSPIVDAGERVEAGQVIADGPCTQNGEMALGKNLLVAIMPWEGHNYEDAIILSNRLVEEDVLTSIHIEEHEIDARDTKLGAEEITRDIPNVSDEVLADLDERGIVRIGAEVRDGDILVGKVTPKGETELTPEERLLRAIFGEKAREVRDTSLKVPHGESGKVIGIRVFSREDDDELPAGVNELVRVYVAQKRKISDGDKLAGRHGNKGVIGKILPAEDMPFLPDGTPVDIILNTHGVPRRMNIGQILETHLGWVAKSGWNIDVANGVPEWAGKLPENLLSAQPDSIVSTPVFDGAQEAELQGLLSATLPNRDGEVLVDGDGKAKLFDGRSGEPFPYPVTVGYMYIMKLHHLVDDKIHARSTGPYSMITQQPLGGKAQFGGQRFGEMECWAMQAYGAAYTLQELLTIKSDDTVGRVKVYEAIVKGENIPEPGIPESFKVLLKELQSLCLNVEVLSSDGAAIELREGEDEDLERAAANLGINLSRNESASVEDLA.

Over residues 13–30 (TDASLHQGRPQSSSNSSV) the composition is skewed to polar residues. The interval 13-35 (TDASLHQGRPQSSSNSSVPGAPN) is disordered.

It belongs to the RNA polymerase beta chain family. In terms of assembly, the RNAP catalytic core consists of 2 alpha, 1 beta, 1 beta' and 1 omega subunit. When a sigma factor is associated with the core the holoenzyme is formed, which can initiate transcription.

It carries out the reaction RNA(n) + a ribonucleoside 5'-triphosphate = RNA(n+1) + diphosphate. In terms of biological role, DNA-dependent RNA polymerase catalyzes the transcription of DNA into RNA using the four ribonucleoside triphosphates as substrates. This is DNA-directed RNA polymerase subunit beta from Mycobacterium marinum (strain ATCC BAA-535 / M).